Here is a 481-residue protein sequence, read N- to C-terminus: Histidine--tRNA ligase, cytoplasmic (481 aa).

Residues 1-48 are disordered; that stretch reads MSEPVVDNVTNKVEKMEVKEKTSAPPKEKKEKKSNKVQLKTPKGTQDY. Over residues 12 to 31 the composition is skewed to basic and acidic residues; it reads KVEKMEVKEKTSAPPKEKKE.

Belongs to the class-II aminoacyl-tRNA synthetase family.

It localises to the cytoplasm. It catalyses the reaction tRNA(His) + L-histidine + ATP = L-histidyl-tRNA(His) + AMP + diphosphate + H(+). This Dictyostelium discoideum (Social amoeba) protein is Histidine--tRNA ligase, cytoplasmic (hisS).